We begin with the raw amino-acid sequence, 367 residues long: 3-dehydroquinate synthase (367 aa).

NAD(+) contacts are provided by residues 69 to 74 (DGESHK), 103 to 107 (GVIGD), 127 to 128 (TT), Lys140, Lys149, and 167 to 170 (TLAT). Residues Glu182, His245, and His262 each contribute to the Zn(2+) site.

It belongs to the sugar phosphate cyclases superfamily. Dehydroquinate synthase family. Requires Co(2+) as cofactor. Zn(2+) serves as cofactor. It depends on NAD(+) as a cofactor.

The protein resides in the cytoplasm. It carries out the reaction 7-phospho-2-dehydro-3-deoxy-D-arabino-heptonate = 3-dehydroquinate + phosphate. The protein operates within metabolic intermediate biosynthesis; chorismate biosynthesis; chorismate from D-erythrose 4-phosphate and phosphoenolpyruvate: step 2/7. Catalyzes the conversion of 3-deoxy-D-arabino-heptulosonate 7-phosphate (DAHP) to dehydroquinate (DHQ). In Stutzerimonas stutzeri (strain A1501) (Pseudomonas stutzeri), this protein is 3-dehydroquinate synthase.